The following is a 391-amino-acid chain: 3-ketoacyl-CoA thiolase (391 aa).

Cys-95 serves as the catalytic Acyl-thioester intermediate. Catalysis depends on proton acceptor residues His-347 and Cys-377.

It belongs to the thiolase-like superfamily. Thiolase family. In terms of assembly, heterotetramer of two alpha chains (FadB) and two beta chains (FadA).

The protein resides in the cytoplasm. It carries out the reaction an acyl-CoA + acetyl-CoA = a 3-oxoacyl-CoA + CoA. The protein operates within lipid metabolism; fatty acid beta-oxidation. In terms of biological role, catalyzes the final step of fatty acid oxidation in which acetyl-CoA is released and the CoA ester of a fatty acid two carbons shorter is formed. The chain is 3-ketoacyl-CoA thiolase from Pseudomonas aeruginosa (strain ATCC 15692 / DSM 22644 / CIP 104116 / JCM 14847 / LMG 12228 / 1C / PRS 101 / PAO1).